The primary structure comprises 748 residues: Semaphorin-3B (748 aa).

The N-terminal stretch at 1-25 (MGRAEAAAMIPGLALLWVAGLGDTA) is a signal peptide. A Sema domain is found at 30-512 (RLRLSFQELQ…SRSAVAQIAL (483 aa)). Asparagine 82 carries an N-linked (GlcNAc...) asparagine glycan. A disulfide bond links cysteine 102 and cysteine 113. Asparagine 124 carries an N-linked (GlcNAc...) asparagine glycan. 5 disulfides stabilise this stretch: cysteine 131–cysteine 140, cysteine 268–cysteine 379, cysteine 292–cysteine 339, cysteine 515–cysteine 533, and cysteine 643–cysteine 709. Residues 561-659 (PSTLCSGDSS…FSQPLRRLVL (99 aa)) form the Ig-like C2-type domain. The disordered stretch occupies residues 708-748 (MCRPQPGHHSVAADSRRKGRNRRMHVSELRAERGPRSAAHW). The span at 732–742 (HVSELRAERGP) shows a compositional bias: basic and acidic residues.

The protein belongs to the semaphorin family.

Its subcellular location is the secreted. In terms of biological role, inhibits axonal extension by providing local signals to specify territories inaccessible for growing axons. This is Semaphorin-3B (Sema3b) from Mus musculus (Mouse).